The sequence spans 506 residues: 2-isopropylmalate synthase (506 aa).

The region spanning 4–266 (ILFMDTTLRD…EPSMTLKEIK (263 aa)) is the Pyruvate carboxyltransferase domain. Positions 13, 201, 203, and 237 each coordinate Mn(2+). Residues 390 to 506 (NITQLQVHFV…KLKSFIQLVK (117 aa)) are regulatory domain.

Belongs to the alpha-IPM synthase/homocitrate synthase family. LeuA type 1 subfamily. In terms of assembly, homodimer. Mn(2+) serves as cofactor.

It is found in the cytoplasm. The catalysed reaction is 3-methyl-2-oxobutanoate + acetyl-CoA + H2O = (2S)-2-isopropylmalate + CoA + H(+). It participates in amino-acid biosynthesis; L-leucine biosynthesis; L-leucine from 3-methyl-2-oxobutanoate: step 1/4. Its function is as follows. Catalyzes the condensation of the acetyl group of acetyl-CoA with 3-methyl-2-oxobutanoate (2-ketoisovalerate) to form 3-carboxy-3-hydroxy-4-methylpentanoate (2-isopropylmalate). This chain is 2-isopropylmalate synthase, found in Bacillus cereus (strain ATCC 10987 / NRS 248).